Here is a 359-residue protein sequence, read N- to C-terminus: MSQVYNFSAGPAMLPTQVLKQMQDELLEYGNTKASVMEISHRDPYFIAMAQKLEQDLRDLMGIPNHYKVLFLQGGASAQFSMVPINLLQGKTKANYAHTGHWSKKAITEGKRYCEVNICTDSSDNKYTDIDVFENWNIDPDGAYLHYTPNETIAGLEFDYVPEVDMPLVADMSSSILSREVDVSKYGVIYASAQKNIGIAGLTIVIVRENLMGNVLANQPVLFDYTTQANNDSMYNTPSTYSWYAASRVFEWLKQQGGLSAMAKINQTKAKTLYDAINGSDFYSNPVAIKYRSWMNVPFLLADESLNGFFLEKAIANNLITLKGHRSVGGMRASIYNAMPQDGINELVNFMKVFEKENT.

Arg-42 lines the L-glutamate pocket. Residues Ala-76–Ser-77, Trp-102, Thr-152, Asp-171, and Gln-194 each bind pyridoxal 5'-phosphate. The residue at position 195 (Lys-195) is an N6-(pyridoxal phosphate)lysine. Asn-236–Thr-237 contributes to the pyridoxal 5'-phosphate binding site.

Belongs to the class-V pyridoxal-phosphate-dependent aminotransferase family. SerC subfamily. As to quaternary structure, homodimer. Pyridoxal 5'-phosphate is required as a cofactor.

Its subcellular location is the cytoplasm. The catalysed reaction is O-phospho-L-serine + 2-oxoglutarate = 3-phosphooxypyruvate + L-glutamate. It catalyses the reaction 4-(phosphooxy)-L-threonine + 2-oxoglutarate = (R)-3-hydroxy-2-oxo-4-phosphooxybutanoate + L-glutamate. Its pathway is amino-acid biosynthesis; L-serine biosynthesis; L-serine from 3-phospho-D-glycerate: step 2/3. The protein operates within cofactor biosynthesis; pyridoxine 5'-phosphate biosynthesis; pyridoxine 5'-phosphate from D-erythrose 4-phosphate: step 3/5. Functionally, catalyzes the reversible conversion of 3-phosphohydroxypyruvate to phosphoserine and of 3-hydroxy-2-oxo-4-phosphonooxybutanoate to phosphohydroxythreonine. This Ruthia magnifica subsp. Calyptogena magnifica protein is Phosphoserine aminotransferase.